The sequence spans 275 residues: Anthracycline biosynthesis protein DnrV (275 aa).

VOC domains are found at residues 8-136 (APAW…VWRK) and 150-263 (SVGW…VVEL).

The protein operates within antibiotic biosynthesis; daunorubicin biosynthesis. Its pathway is antibiotic biosynthesis; carminomycin biosynthesis. Its function is as follows. Involved in the biosynthesis of the anthracyclines carminomycin and daunorubicin (daunomycin) which are aromatic polyketide antibiotics that exhibit high cytotoxicity and are widely applied in the chemotherapy of a variety of cancers. In vivo, it acts jointly with DoxA in the conversion of 13-deoxycarminomycin and 13-deoxydaunorubicin to yield carminomycin and daunorubicin, respectively. In vitro, it also acts jointly with DoxA in the C-14 hydroxylation of daunorubicin to form doxorubicin, although this strain is not a doxorubicin producer. The chain is Anthracycline biosynthesis protein DnrV (dnrV) from Streptomyces peucetius.